The sequence spans 180 residues: Adenine phosphoribosyltransferase (180 aa).

A2 carries the N-acetylalanine modification. A phosphoserine mark is found at S15 and S30. Y60 is subject to Phosphotyrosine. Position 66 is a phosphoserine (S66). Phosphothreonine is present on T135.

This sequence belongs to the purine/pyrimidine phosphoribosyltransferase family. As to quaternary structure, homodimer.

The protein localises to the cytoplasm. The enzyme catalyses AMP + diphosphate = 5-phospho-alpha-D-ribose 1-diphosphate + adenine. It participates in purine metabolism; AMP biosynthesis via salvage pathway; AMP from adenine: step 1/1. Catalyzes a salvage reaction resulting in the formation of AMP, that is energically less costly than de novo synthesis. This is Adenine phosphoribosyltransferase from Bos taurus (Bovine).